A 90-amino-acid chain; its full sequence is Acylphosphatase (90 aa).

Positions 3 to 90 (QKLFIVTGHV…EQFEHFEIRR (88 aa)) constitute an Acylphosphatase-like domain. Catalysis depends on residues Arg-18 and Asn-36.

Belongs to the acylphosphatase family.

The catalysed reaction is an acyl phosphate + H2O = a carboxylate + phosphate + H(+). The polypeptide is Acylphosphatase (acyP) (Actinobacillus pleuropneumoniae serotype 5b (strain L20)).